The chain runs to 532 residues: Bifunctional purine biosynthesis protein PurH (532 aa).

In terms of domain architecture, MGS-like spans 1 to 147; the sequence is MADRPIRQAL…KNHKDVAIVV (147 aa).

It belongs to the PurH family.

The catalysed reaction is (6R)-10-formyltetrahydrofolate + 5-amino-1-(5-phospho-beta-D-ribosyl)imidazole-4-carboxamide = 5-formamido-1-(5-phospho-D-ribosyl)imidazole-4-carboxamide + (6S)-5,6,7,8-tetrahydrofolate. It carries out the reaction IMP + H2O = 5-formamido-1-(5-phospho-D-ribosyl)imidazole-4-carboxamide. It participates in purine metabolism; IMP biosynthesis via de novo pathway; 5-formamido-1-(5-phospho-D-ribosyl)imidazole-4-carboxamide from 5-amino-1-(5-phospho-D-ribosyl)imidazole-4-carboxamide (10-formyl THF route): step 1/1. Its pathway is purine metabolism; IMP biosynthesis via de novo pathway; IMP from 5-formamido-1-(5-phospho-D-ribosyl)imidazole-4-carboxamide: step 1/1. The chain is Bifunctional purine biosynthesis protein PurH from Haemophilus influenzae (strain ATCC 51907 / DSM 11121 / KW20 / Rd).